We begin with the raw amino-acid sequence, 645 residues long: 1,4-alpha-glucan branching enzyme GlgB (645 aa).

Aspartate 309 serves as the catalytic Nucleophile. Glutamate 352 functions as the Proton donor in the catalytic mechanism. The tract at residues valine 619 to arginine 645 is disordered. A compositionally biased stretch (polar residues) spans arginine 636 to arginine 645.

It belongs to the glycosyl hydrolase 13 family. GlgB subfamily. As to quaternary structure, monomer.

It catalyses the reaction Transfers a segment of a (1-&gt;4)-alpha-D-glucan chain to a primary hydroxy group in a similar glucan chain.. It participates in glycan biosynthesis; glycogen biosynthesis. Catalyzes the formation of the alpha-1,6-glucosidic linkages in glycogen by scission of a 1,4-alpha-linked oligosaccharide from growing alpha-1,4-glucan chains and the subsequent attachment of the oligosaccharide to the alpha-1,6 position. The polypeptide is 1,4-alpha-glucan branching enzyme GlgB (Bacillus cereus (strain B4264)).